The following is a 349-amino-acid chain: Leucine-rich repeat-containing protein 58 (349 aa).

10 LRR repeats span residues 14-34 (NLTHLGLENLNLELVSENKRK), 35-56 (DVQQLLLPHNRLVVLPPHVNSF), 58-80 (HLHLLDISNNNMAYIGEEILGLT), 81-102 (KLKTLLAKNNRLDEFSFPKELG), 105-125 (RLEVLNLSGNRFEEIPDQFLQ), 128-149 (TLKSLSLGGNRLKSIPAEIENL), 151-173 (SLEFLYLGGNFISSIPPELANLP), 174-195 (YLSYLVLCDNRIQSVPPQLAQV), 197-217 (SLRSLSLHNLLTYLPREILSL), and 219-239 (QLQELSLRGNPLVVRFVRDLT).

The chain is Leucine-rich repeat-containing protein 58 (lrrc58) from Xenopus tropicalis (Western clawed frog).